The sequence spans 402 residues: Major outer membrane porin (402 aa).

The signal sequence occupies residues 1 to 22 (MKKLLKSALLFAATGSALSLQA).

Belongs to the chlamydial porin (CP) (TC 1.B.2) family. As to quaternary structure, part of a disulfide cross-linked outer membrane complex (COMC) composed of the major outer membrane porin (MOMP), the small cysteine-rich protein (OmcA) and the large cysteine-rich periplasmic protein (OmcB).

It is found in the cell outer membrane. In terms of biological role, in elementary bodies (EBs, the infectious stage, which is able to survive outside the host cell) provides the structural integrity of the outer envelope through disulfide cross-links with the small cysteine-rich protein and the large cysteine-rich periplasmic protein. It has been described in publications as the Sarkosyl-insoluble COMC (Chlamydia outer membrane complex), and serves as the functional equivalent of peptidoglycan. It is present but some of the disulfide bonds are reduced in reticulate bodies (RBs). Functionally, permits diffusion of specific solutes through the outer membrane. The polypeptide is Major outer membrane porin (ompA) (Chlamydophila psittaci (strain ATCC VR-125 / 6BC) (Chlamydia psittaci)).